The sequence spans 185 residues: Elongation factor P (185 aa).

Belongs to the elongation factor P family.

The protein resides in the cytoplasm. It functions in the pathway protein biosynthesis; polypeptide chain elongation. In terms of biological role, involved in peptide bond synthesis. Stimulates efficient translation and peptide-bond synthesis on native or reconstituted 70S ribosomes in vitro. Probably functions indirectly by altering the affinity of the ribosome for aminoacyl-tRNA, thus increasing their reactivity as acceptors for peptidyl transferase. This chain is Elongation factor P (efp), found in Thermotoga maritima (strain ATCC 43589 / DSM 3109 / JCM 10099 / NBRC 100826 / MSB8).